A 1246-amino-acid chain; its full sequence is HMG2-induced ER-remodeling protein 1 (1246 aa).

Disordered regions lie at residues 19–241 (KGKR…GSLT), 263–288 (HHIQ…LPPI), and 816–836 (MPDA…KDEK). Positions 27-41 (KSAASTRTSEATTTS) are enriched in low complexity. The span at 58–95 (TIASPQRPLSGQNVNNELSNSKPAVSAEKVSQQGQVPT) shows a compositional bias: polar residues. A Phosphoserine modification is found at serine 102. Threonine 128 bears the Phosphothreonine mark. 2 stretches are compositionally biased toward low complexity: residues 154 to 163 (RSSSISTSLN) and 211 to 230 (SKIS…PSSS). A compositionally biased stretch (basic and acidic residues) spans 271–282 (SGREQDSPHSES). Residue serine 277 is modified to Phosphoserine. At serine 1013 the chain carries Phosphoserine. Composition is skewed to polar residues over residues 1109–1133 (SSRH…TPDS) and 1200–1215 (SRSP…QQKA). Disordered regions lie at residues 1109–1157 (SSRH…LPKI) and 1192–1224 (SLYG…LVED). Threonine 1130 is modified (phosphothreonine). Residues serine 1200, serine 1204, and serine 1207 each carry the phosphoserine modification.

Belongs to the GIP3/HER1 family. In terms of assembly, may interact with ribosomes.

The protein localises to the cytoplasm. Functionally, required for HMG2-induced endoplasmic reticulum-remodeling. In Saccharomyces cerevisiae (strain ATCC 204508 / S288c) (Baker's yeast), this protein is HMG2-induced ER-remodeling protein 1 (HER1).